The chain runs to 371 residues: MRFYSVLLTIVTLIASTYDAKVNASGIQAIAVSSISHDAPAARMLRADHADERGISVPSASKIVEWMLSPKVAKELTFLENRKVQKWVDKQKTQEYVFTKLGLNSGLDKALSNPKLHVYAAYIDRFNVKNPSNKVALLDKFSEKYTDEGVAKMVEMGIRSSNLETENFASRLWRELLNKWMDNAESAEGVFKILKLDEVGGGIFVTPLFNTWYAFIKEGYTRQAEDVVLRVLSDRYGYDGLSRIFFRGQRNFDLVGDLPIKLETRMVNNWLNKDVSPDKVFKLLKLDEGLDKLLTNSNMQVWESYMMKYNLMPDVEPTTMMQTITRFYNFKELSSMLENAKMVPELNKVAERWQHELRVHYLRAPKMKKEG.

Positions 1–24 (MRFYSVLLTIVTLIASTYDAKVNA) are cleaved as a signal peptide. The RxLR-dEER motif lies at 43 to 53 (RMLRADHADER).

It belongs to the RxLR effector family.

The protein resides in the secreted. It localises to the host nucleus. It is found in the host cytoplasm. In terms of biological role, effector that enhances P.infestans colonization of Nicotiana benthamiana leaves. The sequence is that of RxLR effector protein PITG_12731 from Phytophthora infestans (strain T30-4) (Potato late blight agent).